A 103-amino-acid polypeptide reads, in one-letter code: Small ribosomal subunit protein uS10c (103 aa).

It belongs to the universal ribosomal protein uS10 family. Part of the 30S ribosomal subunit.

It is found in the plastid. Its subcellular location is the chloroplast. In terms of biological role, involved in the binding of tRNA to the ribosomes. The sequence is that of Small ribosomal subunit protein uS10c from Emiliania huxleyi (Coccolithophore).